Reading from the N-terminus, the 409-residue chain is MNSPSPPRAEPKLRDSCHACAASKLKCSKEKPSCARCLKRNKPCQYLVTRRAGRHHGSRSKKVPTISPASAPEPQPFSTTPPDGDFMIEDYFATPISLQFPDFVDTSNGSTTQDWSTHPALFDTTNTSPLFDTSTLNFFDAAESLSAPLQLPTSTIPFPEISHGLQGLPTEHHCGCLVQVLQLMKKLSPSTPVHCTAWPGQQLDKDSGSALLLQPIIAENQSILETVATVLACPCSEDGFLLSTICLVVLKVMSRYEAAARCASLSATNSRSEDALVEDNVAQFTATGSSVAVLIGSYKVEGEGFDRMRAHIVLSELHRVQGLMKGLSERLHVAGRNAKDDNILHASRMNVDSDAVTGAGASAGEDVPMGDATEAVLPFHASFFGQLEANLRRRLRRLSESTTDLVRRA.

Positions 17 to 44 (CHACAASKLKCSKEKPSCARCLKRNKPC) form a DNA-binding region, zn(2)-C6 fungal-type. Positions 49-83 (TRRAGRHHGSRSKKVPTISPASAPEPQPFSTTPPD) are disordered. Residues 51 to 62 (RAGRHHGSRSKK) show a composition bias toward basic residues.

The protein localises to the nucleus. Transcriptional regulator; part of the gene cluster that mediates the biosynthesis of dibenzodioxocinones such as pestalotiollide B, a novel class of inhibitors against cholesterol ester transfer protein (CEPT). This is Transcriptional regulator GME11370 from Pestalotiopsis microspora.